The primary structure comprises 227 residues: Cytidylate kinase (227 aa).

12–20 (GPSGAGKGT) provides a ligand contact to ATP.

Belongs to the cytidylate kinase family. Type 1 subfamily.

The protein localises to the cytoplasm. It carries out the reaction CMP + ATP = CDP + ADP. It catalyses the reaction dCMP + ATP = dCDP + ADP. The protein is Cytidylate kinase of Xanthomonas oryzae pv. oryzae (strain PXO99A).